The chain runs to 427 residues: Serine--tRNA ligase (427 aa).

236–238 (TAE) is an L-serine binding site. ATP is bound at residue 267 to 269 (RRE). Glu290 serves as a coordination point for L-serine. 354–357 (EISS) contacts ATP. L-serine is bound at residue Ser390.

It belongs to the class-II aminoacyl-tRNA synthetase family. Type-1 seryl-tRNA synthetase subfamily. In terms of assembly, homodimer. The tRNA molecule binds across the dimer.

The protein resides in the cytoplasm. The enzyme catalyses tRNA(Ser) + L-serine + ATP = L-seryl-tRNA(Ser) + AMP + diphosphate + H(+). It catalyses the reaction tRNA(Sec) + L-serine + ATP = L-seryl-tRNA(Sec) + AMP + diphosphate + H(+). The protein operates within aminoacyl-tRNA biosynthesis; selenocysteinyl-tRNA(Sec) biosynthesis; L-seryl-tRNA(Sec) from L-serine and tRNA(Sec): step 1/1. Its function is as follows. Catalyzes the attachment of serine to tRNA(Ser). Is also able to aminoacylate tRNA(Sec) with serine, to form the misacylated tRNA L-seryl-tRNA(Sec), which will be further converted into selenocysteinyl-tRNA(Sec). This Rippkaea orientalis (strain PCC 8801 / RF-1) (Cyanothece sp. (strain PCC 8801)) protein is Serine--tRNA ligase.